The primary structure comprises 726 residues: MAAAKWLIASLAFASSGLAFTPEDFISAPRRGEAIPDPKGELAVFHVSKYNFDKKDRPSGWNLLNLKNGDISVLTTDSDVSEITWLGDGTKVVYVNGTDSVEGGVGIWISDAKNFGNAYKAGSVNGAFSGLKLAKAGDKINFVGYGQSTTKGDLYNEAAAKEAVSSARIYDGLFVRHWDTYVGTQFNAVFSGSLTKNGDKYSFDGKLKNLVQPVKYAESPYPPFGGSGDYDLSSDGKTVAFMSKAPELPKANLTTSYIFLVPHDGSRVAEPINKRNGPRTPQGIEGASSSPVFSPDGKRIAYLQMATKNYESDRRVIHIAEVGSNKPVQRIASSWDRSPEAVKWSSDGRTLYVTAEDHATGKLFTLPADARDNHKPSVVKHDGSVSSFYFIGSSKSVLISGNSLWSNALYQVATPGRPNRKLFYANEHDPELKGLGPKDIEPLWVDGARTKIHSWIVKPTGFDKNKVYPLAFLIHGGPQGSWGDSWSTRWNPRVWADQGYVVVAPNPTGSTGFGQKLTDDITNDWGGAPYKDLVKIWEHVRDHIKYIDTDNGIAAGASFGGFMVNWIQGQDLGRKFKALVSHDGTFVGSSKIGTDELFFIEHDFNGTFFEARQNYDRWDCSKPELVAKWSTPQLVIHNDSDFRLSVAEGVGLFNVLQEKGIPSRFLNFPDETHWVTKPENSLVWHQQVLGWINKWSGINKSNPKSIKLSDCPIEVIDHEAHSYFDY.

The first 19 residues, 1–19 (MAAAKWLIASLAFASSGLA), serve as a signal peptide directing secretion. 2 N-linked (GlcNAc...) asparagine glycosylation sites follow: Asn96 and Asn252. The tract at residues 269–291 (AEPINKRNGPRTPQGIEGASSSP) is disordered. Ser558 functions as the Charge relay system in the catalytic mechanism. N-linked (GlcNAc...) asparagine glycans are attached at residues Asn605 and Asn638. Residues Asp641 and His673 each act as charge relay system in the active site. Residue Asn699 is glycosylated (N-linked (GlcNAc...) asparagine).

Belongs to the peptidase S9C family.

It is found in the secreted. In Trichophyton schoenleinii, this protein is Dipeptidyl-peptidase 5 (DPPV).